We begin with the raw amino-acid sequence, 348 residues long: Anthranilate phosphoribosyltransferase (348 aa).

5-phospho-alpha-D-ribose 1-diphosphate contacts are provided by residues Gly-81, 84–85, 91–94, 109–117, and Ser-121; these read GD, NVST, and KHGNRAVSG. Gly-81 lines the anthranilate pocket. Ser-93 is a binding site for Mg(2+). Asn-112 is an anthranilate binding site. Arg-167 is an anthranilate binding site. Asp-226 and Glu-227 together coordinate Mg(2+).

This sequence belongs to the anthranilate phosphoribosyltransferase family. In terms of assembly, homodimer. Mg(2+) is required as a cofactor.

It carries out the reaction N-(5-phospho-beta-D-ribosyl)anthranilate + diphosphate = 5-phospho-alpha-D-ribose 1-diphosphate + anthranilate. It participates in amino-acid biosynthesis; L-tryptophan biosynthesis; L-tryptophan from chorismate: step 2/5. Catalyzes the transfer of the phosphoribosyl group of 5-phosphorylribose-1-pyrophosphate (PRPP) to anthranilate to yield N-(5'-phosphoribosyl)-anthranilate (PRA). The protein is Anthranilate phosphoribosyltransferase of Stutzerimonas stutzeri (strain A1501) (Pseudomonas stutzeri).